A 304-amino-acid chain; its full sequence is Secreted mono- and diacylglycerol lipase MDL3 (304 aa).

Positions 1-19 (MIVGPVISLLLSYFVLVSG) are cleaved as a signal peptide. Residues cysteine 55 and cysteine 297 are joined by a disulfide bond. N-linked (GlcNAc...) asparagine glycosylation is present at asparagine 161. Serine 171 (nucleophile) is an active-site residue. Active-site residues include aspartate 228 and histidine 281.

The protein belongs to the AB hydrolase superfamily. Lipase family. Class 3 subfamily.

Its subcellular location is the secreted. It localises to the cell wall. The enzyme catalyses a monoacylglycerol + H2O = glycerol + a fatty acid + H(+). It catalyses the reaction a diacylglycerol + H2O = a monoacylglycerol + a fatty acid + H(+). In terms of biological role, secreted lipase involved in Dandruff and seborrheic dermatitis (D/SD) probably via lipase-mediated breakdown of sebaceous lipids and release of irritating free fatty acids. Shows activity against monoglyceride and diglyceride substrates, but not triglyceride substrates and does not exhibit regio-selective production of diacylglycerols. Hydrolyzes distearin, dilinolein, dipalmitoylglycerol and dipalmitolein. Cleaves oleic acid from 1,2 isomers of diolein on both the 1 and the 2 position of the glycerol backbone, resulting mainly in free fatty acids but no monoolein is detected. Shows activity on monoolein and liberates mostly free fatty acids, but can also perform the reverse reaction and produce diolein. In Malassezia globosa (strain ATCC MYA-4612 / CBS 7966) (Dandruff-associated fungus), this protein is Secreted mono- and diacylglycerol lipase MDL3.